The chain runs to 82 residues: Cysteine proteinase inhibitor A (82 aa).

This sequence belongs to the cystatin family.

Strong inhibitor of papain and ficin but poor inhibitor of cathepsin H, B and L. The protein is Cysteine proteinase inhibitor A of Helianthus annuus (Common sunflower).